The sequence spans 144 residues: Large ribosomal subunit protein uL15 (144 aa).

The tract at residues 1–53 (MRLNTLSPAEGSKHASKRLGRGIGSGLGKTGGRGHKGQKSRSGGGVRRGFEGG) is disordered. The segment covering 21-31 (RGIGSGLGKTG) has biased composition (gly residues).

This sequence belongs to the universal ribosomal protein uL15 family. In terms of assembly, part of the 50S ribosomal subunit.

Functionally, binds to the 23S rRNA. In Edwardsiella ictaluri (strain 93-146), this protein is Large ribosomal subunit protein uL15.